A 367-amino-acid chain; its full sequence is uncharacterized protein (367 aa).

The protein belongs to the mimivirus L17x/L18x family.

This is an uncharacterized protein from Acanthamoeba polyphaga mimivirus (APMV).